The chain runs to 342 residues: Forkhead box protein D5-C (342 aa).

Residues 1–89 (MNLSQDSSAH…KHSLDTTTNG (89 aa)) form a disordered region. Positions 20-34 (SDDEDEIDILGEDDP) are enriched in acidic residues. Residues 59 to 70 (SKLSCNESASHS) are compositionally biased toward polar residues. Positions 71 to 83 (SGERERGTSKHSL) are enriched in basic and acidic residues. The fork-head DNA-binding region spans 97–191 (KPPYSYIALI…DNGSFLRRRK (95 aa)).

As to expression, at the onset of gastrulation, expressed in the superficial layer of cells in the dorsal blastopore lip (Spemann organizer). In the open neural plate, expressed in a row of cells destined to become the floor plate of the neural tube. After neural tube closure, only detected in the tailtip and a small area located at the midbrain/hindbrain boundary.

The protein localises to the nucleus. Its function is as follows. Transcriptional repressor. The sequence is that of Forkhead box protein D5-C (foxd5-c) from Xenopus laevis (African clawed frog).